Consider the following 201-residue polypeptide: ATP-dependent Clp protease proteolytic subunit (201 aa).

The active-site Nucleophile is S103. H128 is an active-site residue.

This sequence belongs to the peptidase S14 family. Fourteen ClpP subunits assemble into 2 heptameric rings which stack back to back to give a disk-like structure with a central cavity, resembling the structure of eukaryotic proteasomes.

It localises to the cytoplasm. The enzyme catalyses Hydrolysis of proteins to small peptides in the presence of ATP and magnesium. alpha-casein is the usual test substrate. In the absence of ATP, only oligopeptides shorter than five residues are hydrolyzed (such as succinyl-Leu-Tyr-|-NHMec, and Leu-Tyr-Leu-|-Tyr-Trp, in which cleavage of the -Tyr-|-Leu- and -Tyr-|-Trp bonds also occurs).. Cleaves peptides in various proteins in a process that requires ATP hydrolysis. Has a chymotrypsin-like activity. Plays a major role in the degradation of misfolded proteins. This is ATP-dependent Clp protease proteolytic subunit from Bordetella avium (strain 197N).